The chain runs to 163 residues: Photosystem II extrinsic protein V (163 aa).

An N-terminal signal peptide occupies residues 1-26; the sequence is MFRRLIGVVVATVLLSFQLLVGSATA. Cys-63, Cys-66, His-67, and His-118 together coordinate heme c.

It belongs to the cytochrome c family. PsbV subfamily. PSII is composed of 1 copy each of membrane proteins PsbA, PsbB, PsbC, PsbD, PsbE, PsbF, PsbH, PsbI, PsbJ, PsbK, PsbL, PsbM, PsbT, PsbX, PsbY, PsbZ, Psb30/Ycf12, peripheral proteins PsbO, CyanoQ (PsbQ), PsbU, PsbV and a large number of cofactors. It forms dimeric complexes. It depends on heme c as a cofactor.

The protein localises to the cellular thylakoid membrane. Its function is as follows. One of the extrinsic, lumenal subunits of photosystem II (PSII). PSII is a light-driven water plastoquinone oxidoreductase, using light energy to abstract electrons from H(2)O, generating a proton gradient subsequently used for ATP formation. The extrinsic proteins stabilize the structure of photosystem II oxygen-evolving complex (OEC), the ion environment of oxygen evolution and protect the OEC against heat-induced inactivation. Low-potential cytochrome c that plays a role in the OEC of PSII. The protein is Photosystem II extrinsic protein V of Nostoc punctiforme (strain ATCC 29133 / PCC 73102).